The chain runs to 189 residues: Probable nicotinate-nucleotide adenylyltransferase (189 aa).

It belongs to the NadD family.

It catalyses the reaction nicotinate beta-D-ribonucleotide + ATP + H(+) = deamido-NAD(+) + diphosphate. It participates in cofactor biosynthesis; NAD(+) biosynthesis; deamido-NAD(+) from nicotinate D-ribonucleotide: step 1/1. Its function is as follows. Catalyzes the reversible adenylation of nicotinate mononucleotide (NaMN) to nicotinic acid adenine dinucleotide (NaAD). The chain is Probable nicotinate-nucleotide adenylyltransferase from Staphylococcus aureus (strain USA300 / TCH1516).